The primary structure comprises 92 residues: MLDTNPPAESQYKPTYADILAQLNDIQESLEIAIDKGYPTIKAEGVPDIRMSDKDYLEWALERINCLIYDVENIQEKLAQLLQINCDTNCEL.

This is an uncharacterized protein from Pasteurella multocida (strain Pm70).